Here is a 250-residue protein sequence, read N- to C-terminus: DNA repair protein RecO (250 aa).

This sequence belongs to the RecO family.

Its function is as follows. Involved in DNA repair and RecF pathway recombination. The protein is DNA repair protein RecO of Granulibacter bethesdensis (strain ATCC BAA-1260 / CGDNIH1).